We begin with the raw amino-acid sequence, 664 residues long: Transketolase 1 (664 aa).

Residue histidine 26 coordinates substrate. Residues histidine 66 and 114–116 (GPL) contribute to the thiamine diphosphate site. Aspartate 155 is a binding site for Mg(2+). Positions 156 and 185 each coordinate thiamine diphosphate. Mg(2+) contacts are provided by asparagine 185 and isoleucine 187. Residues histidine 260, arginine 357, and serine 384 each contribute to the substrate site. Histidine 260 serves as a coordination point for thiamine diphosphate. Glutamate 411 (proton donor) is an active-site residue. Phenylalanine 437 serves as a coordination point for thiamine diphosphate. 3 residues coordinate substrate: histidine 461, aspartate 469, and arginine 520.

Belongs to the transketolase family. Homodimer. Mg(2+) serves as cofactor. The cofactor is Ca(2+). It depends on Mn(2+) as a cofactor. Requires Co(2+) as cofactor. Thiamine diphosphate is required as a cofactor.

The catalysed reaction is D-sedoheptulose 7-phosphate + D-glyceraldehyde 3-phosphate = aldehydo-D-ribose 5-phosphate + D-xylulose 5-phosphate. Catalyzes the transfer of a two-carbon ketol group from a ketose donor to an aldose acceptor, via a covalent intermediate with the cofactor thiamine pyrophosphate. This Vibrio vulnificus (strain YJ016) protein is Transketolase 1 (tkt1).